The following is a 220-amino-acid chain: Adenylate kinase (220 aa).

10–15 (GAGKGT) serves as a coordination point for ATP. The NMP stretch occupies residues 30–59 (STGDMLRAAVKNCTPLGLKAKEIMDAGGLV). Residues Thr-31, Arg-36, 57–59 (GLV), 85–88 (GFPR), and Gln-92 contribute to the AMP site. The LID stretch occupies residues 126–163 (GRRTCPSCGKGFHVLFAPPRKAGVCDFCGADLVQRGDD). Arg-127 is a binding site for ATP. Positions 130, 133, 150, and 153 each coordinate Zn(2+). AMP-binding residues include Arg-160 and Arg-171. Leu-199 is a binding site for ATP.

This sequence belongs to the adenylate kinase family. As to quaternary structure, monomer.

It localises to the cytoplasm. The enzyme catalyses AMP + ATP = 2 ADP. It participates in purine metabolism; AMP biosynthesis via salvage pathway; AMP from ADP: step 1/1. Functionally, catalyzes the reversible transfer of the terminal phosphate group between ATP and AMP. Plays an important role in cellular energy homeostasis and in adenine nucleotide metabolism. This chain is Adenylate kinase, found in Pelobacter propionicus (strain DSM 2379 / NBRC 103807 / OttBd1).